A 165-amino-acid chain; its full sequence is Selenoprotein F (165 aa).

The signal sequence occupies residues 1 to 31 (MVAMAAGPSGCLVPAFGLRLLLATVLQAVSA). Position 96 (selenocysteine 96) is a non-standard amino acid, selenocysteine.

In terms of assembly, forms a tight complex with UGGT1/UGCGL1. Interacts with UGGT2/UGCGL2. Interacts with RDH11. In terms of processing, the N-terminus is blocked. In terms of tissue distribution, higher levels in prostate and thyroid gland.

The protein resides in the endoplasmic reticulum lumen. Functionally, may be involved in redox reactions associated with the formation of disulfide bonds. May contribute to the quality control of protein folding in the endoplasmic reticulum. May regulate protein folding by enhancing the catalytic activity of UGGT1/UGCGL1 and UGGT2/UGCGL2. This is Selenoprotein F from Homo sapiens (Human).